The primary structure comprises 124 residues: Glycine cleavage system H protein (124 aa).

The 83-residue stretch at 22–104 (KAKVGITDFA…YENGYLFIIE (83 aa)) folds into the Lipoyl-binding domain. N6-lipoyllysine is present on Lys63.

This sequence belongs to the GcvH family. The glycine cleavage system is composed of four proteins: P, T, L and H. The cofactor is (R)-lipoate.

The glycine cleavage system catalyzes the degradation of glycine. The H protein shuttles the methylamine group of glycine from the P protein to the T protein. The sequence is that of Glycine cleavage system H protein from Endomicrobium trichonymphae.